The sequence spans 180 residues: Adenine phosphoribosyltransferase (180 aa).

It belongs to the purine/pyrimidine phosphoribosyltransferase family. In terms of assembly, homodimer.

It localises to the cytoplasm. The catalysed reaction is AMP + diphosphate = 5-phospho-alpha-D-ribose 1-diphosphate + adenine. It participates in purine metabolism; AMP biosynthesis via salvage pathway; AMP from adenine: step 1/1. Its function is as follows. Catalyzes a salvage reaction resulting in the formation of AMP, that is energically less costly than de novo synthesis. The polypeptide is Adenine phosphoribosyltransferase (Mycolicibacterium paratuberculosis (strain ATCC BAA-968 / K-10) (Mycobacterium paratuberculosis)).